The primary structure comprises 174 residues: Nucleoside-triphosphatase THEP1 (174 aa).

Residues 7-14 and 98-105 contribute to the ATP site; these read GRPGSGKS and CIIIDEIG.

Belongs to the THEP1 NTPase family.

It carries out the reaction a ribonucleoside 5'-triphosphate + H2O = a ribonucleoside 5'-diphosphate + phosphate + H(+). In terms of biological role, has nucleotide phosphatase activity towards ATP, GTP, CTP, TTP and UTP. May hydrolyze nucleoside diphosphates with lower efficiency. This Methanothermobacter thermautotrophicus (strain ATCC 29096 / DSM 1053 / JCM 10044 / NBRC 100330 / Delta H) (Methanobacterium thermoautotrophicum) protein is Nucleoside-triphosphatase THEP1.